Reading from the N-terminus, the 327-residue chain is Serpentine receptor class alpha-12 (327 aa).

At 1-18 (MGCASEIQAEIFTSFGQL) the chain is on the extracellular side. Residues 19 to 39 (FYASFQTILFLATIIGSLLAI) form a helical membrane-spanning segment. Residues 40–53 (FELCKKTTVPDSTR) are Cytoplasmic-facing. A helical membrane pass occupies residues 54–74 (VLLIGSLFFANAHEFAYFTAP). Over 75–98 (LKVFQLNIFNTNTSCYPLISTRDC) the chain is Extracellular. Residues 99 to 119 (IPTTTVLAMGISGNMLIQSAL) form a helical membrane-spanning segment. Residues 120-138 (SIDRLLATIFPFSYSRMRA) are Cytoplasmic-facing. The helical transmembrane segment at 139 to 159 (LPGFVLLIMVLIPAMFTYSWI) threads the bilayer. Over 160-185 (RLDIVLDDYQMFCSQWSANISTRANT) the chain is Extracellular. The chain crosses the membrane as a helical span at residues 186 to 206 (FLEICSYLTVAHIIINCLIIL). Residues 207–234 (RNRAIEKRCRFDVTQRYLTSENLKTTQA) are Cytoplasmic-facing. The chain crosses the membrane as a helical span at residues 235-255 (ICYLSIAQFLAMFMYSGGVLL). Residues 256–270 (MRKNRENIPTLIYFN) lie on the Extracellular side of the membrane. A helical membrane pass occupies residues 271 to 291 (VIVWVYAPPYACVSLAPLILF). The Cytoplasmic portion of the chain corresponds to 292-327 (SLWNLKKQRHIQIKSVQSAQKETQDDYIRKLQKSWK).

The protein belongs to the nematode receptor-like protein sra family. As to expression, expressed in neurons RIF/RIG and PVT.

It localises to the membrane. The chain is Serpentine receptor class alpha-12 (sra-12) from Caenorhabditis elegans.